The primary structure comprises 711 residues: Ferric reductase transmembrane component 3 (711 aa).

The first 20 residues, 1 to 20 (MYWVLLCGSILLCCLSGASA), serve as a signal peptide directing secretion. The Extracellular portion of the chain corresponds to 21 to 166 (SPAKTKMYGK…YANYDIGHTY (146 aa)). Residues Asn-85, Asn-108, Asn-120, and Asn-134 are each glycosylated (N-linked (GlcNAc...) asparagine). A helical transmembrane segment spans residues 167 to 187 (GGIICAYFVGVMILASILHYL). The Cytoplasmic segment spans residues 188–237 (SYTPFKTALFKQRLVRYVRRYLTIPTIWGKHASSFSYLKIFTGFLPTRSE). A helical transmembrane segment spans residues 238 to 258 (GVIILGYLVLHTVFLAYGYQY). At 259 to 280 (DPYNLIFDSRREQIARYVADRS) the chain is on the extracellular side. In terms of domain architecture, Ferric oxidoreductase spans 280–414 (SGVLAFAHFP…SGIEWIYAAI (135 aa)). The helical transmembrane segment at 281–301 (GVLAFAHFPLIALFAGRNNFL) threads the bilayer. The Cytoplasmic portion of the chain corresponds to 302 to 321 (EFISGVKYTSFIMFHKWLGR). Positions 316 and 330 each coordinate heme. The chain crosses the membrane as a helical span at residues 322–341 (MMFLDAVIHGAAYTSYSVFY). Topologically, residues 342–353 (KDWAASKEETYW) are extracellular. Residues 354–374 (QFGVAALCIVGVMVFFSLAMF) form a helical membrane-spanning segment. Residues 375-376 (RK) lie on the Cytoplasmic side of the membrane. A helical membrane pass occupies residues 377-397 (FFYEAFLFLHIVLGALFFYTC). His-386 lines the heme pocket. Position 398 (Trp-398) is a topological domain, extracellular. Residues 399 to 419 (EHVVELSGIEWIYAAIAIWTI) traverse the membrane as a helical segment. His-400 contributes to the heme binding site. Residues 415 to 534 (AIWTIDRLIR…EGPYGSSSPV (120 aa)) enclose the FAD-binding FR-type domain. Topologically, residues 420–711 (DRLIRIVRVS…IEYFEEYQSW (292 aa)) are cytoplasmic. Position 479 to 485 (479 to 485 (HPFTVLD)) interacts with FAD. NADP(+)-binding positions include 526-529 (GPYG) and 677-678 (CG).

It belongs to the ferric reductase (FRE) family. It depends on FAD as a cofactor. Heme serves as cofactor.

The protein localises to the cell membrane. The catalysed reaction is 2 a Fe(II)-siderophore + NADP(+) + H(+) = 2 a Fe(III)-siderophore + NADPH. Functionally, siderophore-iron reductase responsible for reducing extracellular iron prior to import. Catalyzes the reductive uptake of Fe(3+) bound to di- and trihydroxamate siderophores. Fe(3+) is reduced to Fe(2+), which then dissociates from the siderophore and can be imported by the high-affinity Fe(2+) transport complex in the plasma membrane. In Saccharomyces cerevisiae (strain ATCC 204508 / S288c) (Baker's yeast), this protein is Ferric reductase transmembrane component 3 (FRE3).